Here is a 266-residue protein sequence, read N- to C-terminus: Hydroxyethylthiazole kinase (266 aa).

Substrate is bound at residue M46. Residues K122 and T166 each contribute to the ATP site. Residue G193 participates in substrate binding.

The protein belongs to the Thz kinase family. Requires Mg(2+) as cofactor.

It carries out the reaction 5-(2-hydroxyethyl)-4-methylthiazole + ATP = 4-methyl-5-(2-phosphooxyethyl)-thiazole + ADP + H(+). It participates in cofactor biosynthesis; thiamine diphosphate biosynthesis; 4-methyl-5-(2-phosphoethyl)-thiazole from 5-(2-hydroxyethyl)-4-methylthiazole: step 1/1. Its function is as follows. Catalyzes the phosphorylation of the hydroxyl group of 4-methyl-5-beta-hydroxyethylthiazole (THZ). The sequence is that of Hydroxyethylthiazole kinase from Caldivirga maquilingensis (strain ATCC 700844 / DSM 13496 / JCM 10307 / IC-167).